Consider the following 968-residue polypeptide: Breast cancer anti-estrogen resistance protein 1 (968 aa).

Methionine 1 bears the N-acetylmethionine mark. One can recognise an SH3 domain in the interval aspartate 97–glycine 159. A disordered region spans residues lysine 164 to tyrosine 277. Residues alanine 167–serine 182 are compositionally biased toward pro residues. The interval tyrosine 213–alanine 514 is substrate for kinases. The residue at position 226 (tyrosine 226) is a Phosphotyrosine; by SRC. Residues proline 233–glutamine 249 show a composition bias toward polar residues. The residue at position 237 (serine 237) is a Phosphoserine. A Phosphotyrosine modification is found at tyrosine 332. Tyrosine 347 is subject to Phosphotyrosine; by ABL1. A Phosphothreonine modification is found at threonine 367. At serine 390 the chain carries Phosphoserine. The segment at lysine 393–aspartate 416 is disordered. 3 positions are modified to phosphotyrosine: tyrosine 460, tyrosine 470, and tyrosine 508. 2 disordered regions span residues isoleucine 503–valine 544 and arginine 705–glycine 756. Over residues alanine 514–arginine 524 the composition is skewed to basic and acidic residues. Residues leucine 525–leucine 542 show a composition bias toward low complexity. Residues serine 526, serine 535, and serine 737 each carry the phosphoserine modification. Positions glycine 715 to asparagine 753 are enriched in polar residues. The SH3-binding motif lies at arginine 733–phenylalanine 741. The segment at phenylalanine 844–glycine 894 is divergent helix-loop-helix motif.

This sequence belongs to the CAS family. As to quaternary structure, forms complexes in vivo with PTK2/FAK1, adapter protein CRKL and LYN kinase. Can heterodimerize with NEDD9. Component of a complex comprised of SH2D3C, BCAR1/CAS, and CRK. Within the complex, interacts with SH2D3C (via C-terminus), and CRK. Part of a complex comprised of PTPRA, BCAR1, BCAR3 (via SH2 domain) and SRC; the formation of the complex is dependent on integrin mediated-tyrosine phosphorylation of PTPRA. Interacts with BCAR3 (via Ras-GEF domain); the interaction regulates adhesion-dependent serine phosphorylation. Interacts with SMAD2 and SMAD3. Interacts with NPHP1. Interacts with PTK2B/PYK2. Interacts (via C-terminus) with SH2D3C/CHAT isoform 2 (via C-terminus). Interacts with activated CSPG4. Interacts with BMX, INPPL1/SHIP2 and PEAK1. Part of a collagen stimulated complex involved in cell migration composed of CDC42, CRK, TNK2 and BCAR1/p130cas. Interacts with TNK2 via SH3 domains. Interacts with PTK2B/PYK2. Interacts (when tyrosine-phosphorylated) with tensin TNS1; the interaction is increased by phosphorylation of TNS1. Post-translationally, PTK2/FAK1 activation mediates phosphorylation at the YDYVHL motif; phosphorylation is most likely catalyzed by SRC family members. SRC-family kinases are recruited to the phosphorylated sites and can phosphorylate other tyrosine residues. Tyrosine phosphorylation is triggered by integrin mediated adhesion of cells to the extracellular matrix. In terms of processing, phosphorylated by SRC kinase in a EDN1- and PTK2B-mediated manner; phosphorylation strengthens its interaction with BCAR3 as part of the PTK2B/BCAR1/BCAR3/RAP1 signaling pathway. Dephosphorylated by PTPN14 at Tyr-226. In terms of tissue distribution, widely expressed. Higher expression in lung, intestine and testis.

The protein localises to the cell junction. The protein resides in the focal adhesion. It localises to the cytoplasm. Its subcellular location is the cell projection. It is found in the axon. Its function is as follows. Docking protein which plays a central coordinating role for tyrosine-kinase-based signaling related to cell adhesion. Implicated in induction of cell migration and cell branching. Involved in the BCAR3-mediated inhibition of TGFB signaling. The chain is Breast cancer anti-estrogen resistance protein 1 (Bcar1) from Rattus norvegicus (Rat).